A 340-amino-acid polypeptide reads, in one-letter code: Outer membrane protein B (340 aa).

The N-terminal stretch at 1 to 26 (MSSKLVNYLRLTFLSFLGIASTSLDA) is a signal peptide.

It belongs to the chlamydial OMP family.

It localises to the cell outer membrane. The polypeptide is Outer membrane protein B (ompB) (Chlamydia trachomatis serovar D (strain ATCC VR-885 / DSM 19411 / UW-3/Cx)).